The chain runs to 94 residues: Small ribosomal subunit protein uS19 (94 aa).

It belongs to the universal ribosomal protein uS19 family.

Its function is as follows. Protein S19 forms a complex with S13 that binds strongly to the 16S ribosomal RNA. This Wolbachia pipientis wMel protein is Small ribosomal subunit protein uS19.